Consider the following 2171-residue polypeptide: Voltage-dependent L-type calcium channel subunit alpha-1C (2171 aa).

The Cytoplasmic segment spans residues 1–154 (MLRALVQPAT…RACISIVEWK (154 aa)). Positions 77–98 (GAALSWQAAIDAARQAKLMGSA) are calmodulin-binding. The interval 103–128 (ISTVSSTQRKRQQYGKPKKQGSTTAT) is disordered. Residues 110 to 121 (QRKRQQYGKPKK) are compositionally biased toward basic residues. Residues 141–438 (NPIRRACISI…LVLGVLSGEF (298 aa)) form an I repeat. The helical transmembrane segment at 155–173 (PFEIIILLTIFANCVALAI) threads the bilayer. Topologically, residues 174–188 (YIPFPEDDSNATNSN) are extracellular. N-linked (GlcNAc...) asparagine glycosylation occurs at asparagine 183. A helical membrane pass occupies residues 189-209 (LERVEYLFLIIFTVEAFLKVI). Residues 210 to 218 (AYGLLFHPN) are Cytoplasmic-facing. The chain crosses the membrane as a helical span at residues 219-239 (AYLRNGWNLLDFIIVVVGLFS). Residues 240–262 (AILEQATKADGANALGGKGAGFD) are Extracellular-facing. The chain crosses the membrane as a helical span at residues 263–281 (VKALRAFRVLRPLRLVSGV). Residues 282–298 (PSLQVVLNSIIKAMVPL) lie on the Cytoplasmic side of the membrane. The chain crosses the membrane as a helical span at residues 299-320 (LHIALLVLFVIIIYAIIGLELF). Residues 321–380 (MGKMHKTCYNQEGVADVPAEDDPSPCALETGHGRQCQNGTVCKPGWDGPKHGITNFDNFA) lie on the Extracellular side of the membrane. Disulfide bonds link cysteine 328/cysteine 356 and cysteine 346/cysteine 362. Asparagine 358 is a glycosylation site (N-linked (GlcNAc...) asparagine). Positions 381-402 (FAMLTVFQCITMEGWTDVLYWM) form an intramembrane region, pore-forming. Residues 391–394 (TMEG) carry the Selectivity filter of repeat I motif. Glutamate 393 serves as a coordination point for Ca(2+). Residues 403–410 (QDAMGYEL) lie on the Extracellular side of the membrane. Residues 411-431 (PWVYFVSLVIFGSFFVLNLVL) form a helical membrane-spanning segment. Residues 432–554 (GVLSGEFSKE…RKCRAAVKSN (123 aa)) are Cytoplasmic-facing. Residues 458-475 (QQLEEDLKGYLDWITQAE) form an AID/alpha-interaction domain; mediates interaction with the beta subunit region. Residues 479 to 511 (PENEDEGMDEEKPRNMSMPTSETESVNTENVAG) form a disordered region. The segment covering 495–508 (SMPTSETESVNTEN) has biased composition (polar residues). At serine 499 the chain carries Phosphoserine. Phosphothreonine is present on threonine 506. One copy of the II repeat lies at 540 to 786 (NRFCRRKCRA…VFLAIAVDNL (247 aa)). Residues 555-573 (VFYWLVIFLVFLNTLTIAS) traverse the membrane as a helical segment. The Extracellular portion of the chain corresponds to 574 to 584 (EHYNQPHWLTE). A helical transmembrane segment spans residues 585–605 (VQDTANKALLALFTAEMLLKM). Residues 606-616 (YSLGLQAYFVS) lie on the Cytoplasmic side of the membrane. A helical membrane pass occupies residues 617 to 636 (LFNRFDCFIVCGGILETILV). The Extracellular portion of the chain corresponds to 637–645 (ETKVMSPLG). The chain crosses the membrane as a helical span at residues 646 to 664 (ISVLRCVRLLRIFKITRYW). The Cytoplasmic portion of the chain corresponds to 665–683 (NSLSNLVASLLNSVRSIAS). A helical transmembrane segment spans residues 684–703 (LLLLLFLFIIIFSLLGMQLF). The Extracellular segment spans residues 704–723 (GGKFNFDEMQTRRSTFDNFP). An intramembrane region (pore-forming) is located at residues 724–745 (QSLLTVFQILTGEDWNSVMYDG). The Selectivity filter of repeat II motif lies at 734-737 (TGED). Glutamate 736 is a Ca(2+) binding site. Over 746 to 755 (IMAYGGPSFP) the chain is Extracellular. A helical membrane pass occupies residues 756–775 (GMLVCIYFIILFICGNYILL). Residues 776–930 (NVFLAIAVDN…LQCHRIVNDT (155 aa)) lie on the Cytoplasmic side of the membrane. A disordered region spans residues 794–891 (SAQKEEEEEK…EMPVGPRPRP (98 aa)). Basic and acidic residues predominate over residues 813–836 (SPEKKQEVVGKPALEEAKEEKIEL). Serine 838 and serine 845 each carry phosphoserine. The interval 859–906 (NESEDKSPYPNPETTGEEDEEEPEMPVGPRPRPLSELHLKEKAVPMPE) is interaction with STAC2. The segment covering 873-882 (TGEEDEEEPE) has biased composition (acidic residues). An III repeat occupies 917 to 1199 (NRFRLQCHRI…IFVGFVIVTF (283 aa)). Residues 931–949 (IFTNLILFFILLSSISLAA) traverse the membrane as a helical segment. At 950–961 (EDPVQHTSFRNH) the chain is on the extracellular side. The chain crosses the membrane as a helical span at residues 962-981 (ILFYFDIVFTTIFTIEIALK). The Cytoplasmic portion of the chain corresponds to 982–997 (MTAYGAFLHKGSFCRN). A helical transmembrane segment spans residues 998 to 1016 (YFNILDLLVVSVSLISFGI). Topologically, residues 1017–1023 (QSSAINV) are extracellular. A helical membrane pass occupies residues 1024 to 1042 (VKILRVLRVLRPLRAINRA). At 1043–1061 (KGLKHVVQCVFVAIRTIGN) the chain is on the cytoplasmic side. Residues 1062–1081 (IVIVTTLLQFMFACIGVQLF) traverse the membrane as a helical segment. The Extracellular segment spans residues 1082 to 1131 (KGKLYTCSDSSKQTEAECKGNYITYKDGEVDHPIIQPRSWENSKFDFDNV). Cysteine 1088 and cysteine 1099 are joined by a disulfide. Positions 1119–1208 (RSWENSKFDF…FQEQGEQEYK (90 aa)) are dihydropyridine binding. An intramembrane region (pore-forming) is located at residues 1132 to 1152 (LAAMMALFTVSTFEGWPELLY). Residues 1143–1146 (TFEG) carry the Selectivity filter of repeat III motif. Residue glutamate 1145 participates in Ca(2+) binding. Topologically, residues 1153–1169 (RSIDSHTEDKGPIYNYR) are extracellular. Residues 1170–1191 (VEISIFFIIYIIIIAFFMMNIF) traverse the membrane as a helical segment. The Cytoplasmic portion of the chain corresponds to 1192 to 1249 (VGFVIVTFQEQGEQEYKNCELDKNQRQCVEYALKARPLRRYIPKNQHQYKVWYVVNST). The stretch at 1236 to 1509 (NQHQYKVWYV…LFVAVIMDNF (274 aa)) is one IV repeat. The chain crosses the membrane as a helical span at residues 1250–1271 (YFEYLMFVLILLNTICLAMQHY). Topologically, residues 1272-1279 (GQSCLFKI) are extracellular. A helical transmembrane segment spans residues 1280–1301 (AMNILNMLFTGLFTVEMILKLI). The Cytoplasmic portion of the chain corresponds to 1302–1311 (AFKPKGYFSD). The helical transmembrane segment at 1312–1331 (PWNVFDFLIVIGSIIDVILS) threads the bilayer. At 1332–1354 (ETNPAEHTQCSPSMNAEENSRIS) the chain is on the extracellular side. The helical transmembrane segment at 1355-1373 (ITFFRLFRVMRLVKLLSRG) threads the bilayer. Residues 1374–1391 (EGIRTLLWTFIKSFQALP) lie on the Cytoplasmic side of the membrane. The helical transmembrane segment at 1392–1412 (YVALLIVMLFFIYAVIGMQVF) threads the bilayer. Over 1413–1434 (GKIALNDTTEINRNNNFQTFPQ) the chain is Extracellular. N-linked (GlcNAc...) asparagine glycosylation is present at asparagine 1418. Residues 1435–1453 (AVLLLFRCATGEAWQDIML) constitute an intramembrane region (pore-forming). Residues 1444–1447 (TGEA) carry the Selectivity filter of repeat IV motif. The Extracellular segment spans residues 1454 to 1481 (ACMPGKKCAPESEPHNSTEGETPCGSSF). The interval 1460–1528 (KCAPESEPHN…LGPHHLDEFK (69 aa)) is dihydropyridine binding. Cysteine 1461 and cysteine 1477 form a disulfide bridge. Asparagine 1469 carries an N-linked (GlcNAc...) asparagine glycan. Residues 1474–1516 (ETPCGSSFAVFYFISFYMLCAFLIINLFVAVIMDNFDYLTRDW) form a phenylalkylamine binding region. The chain crosses the membrane as a helical span at residues 1482–1506 (AVFYFISFYMLCAFLIINLFVAVIM). Topologically, residues 1507–2171 (DNFDYLTRDW…ADRRAGVSSL (665 aa)) are cytoplasmic. Residues 1641–1668 (DEVTVGKFYATFLIQEYFRKFKKRKEQG) are important for interaction with STAC1, STAC2 and STAC3. Residues 1647–1667 (KFYATFLIQEYFRKFKKRKEQ) are calmodulin-binding IQ region. Residues 1681–1700 (LQAGLRTLHDIGPEIRRAIS) are important for localization in at the junctional membrane. Serine 1700 and serine 1721 each carry phosphoserine. The tract at residues 1760–1797 (ISKAGNNQGDTESPSHEKLVDSTFTPSSYSSTGSNANI) is disordered. Residues 1781 to 1793 (STFTPSSYSSTGS) show a composition bias toward polar residues. Phosphoserine; by PKA is present on serine 1928. Disordered regions lie at residues 1971 to 2014 (RSHS…EKLN), 2026 to 2060 (SGEN…GRQF), and 2114 to 2155 (SGGA…PGCG). Residues 2130 to 2140 (NRRDPGRDRAG) are compositionally biased toward basic and acidic residues.

Belongs to the calcium channel alpha-1 subunit (TC 1.A.1.11) family. CACNA1C subfamily. Component of a calcium channel complex consisting of a pore-forming alpha subunit (CACNA1C) and ancillary beta, gamma and delta subunits. The channel complex contains alpha, beta, gamma and delta subunits in a 1:1:1:1 ratio, i.e. it contains only one of each type of subunit. CACNA1C channel activity is modulated by ancillary subunits, such as CACNB1, CACNB2, CACNB3, CACNA2D1 and CACNA2D4. Interacts with CACNB1. Interacts with CACNB2. Identified in a complex with CACNA2D4 and CACNB3. Interacts with CACNB3. Interacts with CACNA2D1. Interacts with the gamma subunits CACNG4, CACNG6, CACNG7 and CACNG8. Interacts with CACNA2D4. Interacts with CALM1. Interacts (via the N-terminus and the C-terminal C and IQ motifs) with CABP1; this inhibits Ca(2+)-dependent channel inactivation. The binding via the C motif is calcium independent whereas the binding via IQ requires the presence of calcium and is mutually exclusive with calmodulin binding. The binding to the cytoplasmic N-terminal domain is calcium independent but is essential for the channel modulation. Interacts (via C-terminal CDB motif) with CABP5; in a calcium-dependent manner. Interacts with CIB1; the interaction increases upon cardiomyocytes hypertrophy. Interacts with STAC1, STAC2 and STAC3; this inhibits channel inactivation, probably by hindering CALM1 binding. In terms of processing, phosphorylation by PKA at Ser-1928 activates the channel. Elevated levels of blood glucose lead to increased phosphorylation by PKA. Expression in cardiac muscle. In lung, expressed in airway and vascular smooth muscle cells.

It localises to the cell membrane. The protein localises to the sarcolemma. The protein resides in the perikaryon. It is found in the postsynaptic density membrane. Its subcellular location is the cell projection. It localises to the dendrite. The protein localises to the T-tubule. It catalyses the reaction Ca(2+)(in) = Ca(2+)(out). With respect to regulation, inhibited by dihydropyridines (DHP), such as isradipine. Inhibited by nifedipine. Channel activity is regulated by Ca(2+) and calmodulin. Binding of STAC1, STAC2 or STAC3 to a region that overlaps with the calmodulin binding site inhibits channel inactivation by Ca(2+) and calmodulin. Binding of calmodulin or CABP1 at the same regulatory sites results in opposite effects on the channel function. Shear stress and pressure increases calcium channel activity. Pore-forming, alpha-1C subunit of the voltage-gated calcium channel that gives rise to L-type calcium currents. Mediates influx of calcium ions into the cytoplasm, and thereby triggers calcium release from the sarcoplasm. Plays an important role in excitation-contraction coupling in the heart. Required for normal heart development and normal regulation of heart rhythm. Required for normal contraction of smooth muscle cells in blood vessels and in the intestine. Essential for normal blood pressure regulation via its role in the contraction of arterial smooth muscle cells. Long-lasting (L-type) calcium channels belong to the 'high-voltage activated' (HVA) group. This is Voltage-dependent L-type calcium channel subunit alpha-1C (CACNA1C) from Oryctolagus cuniculus (Rabbit).